Consider the following 413-residue polypeptide: GDP-mannose-dependent alpha-mannosyltransferase (413 aa).

Belongs to the glycosyltransferase group 1 family.

It functions in the pathway phospholipid metabolism; phosphatidylinositol metabolism. Its function is as follows. Catalyzes the addition of a mannose residue from GDP-D-mannose to GlcAGroAc2 to generate 1,2-di-O-C16/C18:1-(alpha-D-mannopyranosyl)-(1-4)-(alpha-D-glucopyranosyluronic acid)-(1-3)-glycerol(ManGlcAGroAc2). The chain is GDP-mannose-dependent alpha-mannosyltransferase (mgtA) from Corynebacterium glutamicum (strain ATCC 13032 / DSM 20300 / JCM 1318 / BCRC 11384 / CCUG 27702 / LMG 3730 / NBRC 12168 / NCIMB 10025 / NRRL B-2784 / 534).